Reading from the N-terminus, the 333-residue chain is Foldase protein PrsA (333 aa).

The first 22 residues, 1-22 (MKKSTKLLAGIVTLASAMTLAA), serve as a signal peptide directing secretion. C23 is lipidated: N-palmitoyl cysteine. C23 is lipidated: S-diacylglycerol cysteine. In terms of domain architecture, PpiC spans 145–240 (TPEMTTQVTT…NKFYIVKVTK (96 aa)). The segment at 301–333 (DKKASKANTSKSDQKSSSDSSKDSQSSKSKSEK) is disordered. Basic and acidic residues predominate over residues 312–322 (SDQKSSSDSSK). Positions 323-333 (DSQSSKSKSEK) are enriched in low complexity.

It belongs to the PrsA family.

It localises to the cell membrane. The catalysed reaction is [protein]-peptidylproline (omega=180) = [protein]-peptidylproline (omega=0). Plays a major role in protein secretion by helping the post-translocational extracellular folding of several secreted proteins. This Streptococcus equi subsp. equi (strain 4047) protein is Foldase protein PrsA.